Here is a 296-residue protein sequence, read N- to C-terminus: D-alanine--D-alanine ligase (296 aa).

An ATP-grasp domain is found at 99-292 (TYRVLDGYVN…FEELVDAIIQ (194 aa)). An ATP-binding site is contributed by 125 to 176 (GFPCVIKPRKEGSSIGVHICDNSNQLYNDLSEELKKYNEMMIQRYIEGRELT). Positions 247, 259, and 261 each coordinate Mg(2+).

The protein belongs to the D-alanine--D-alanine ligase family. Mg(2+) is required as a cofactor. Mn(2+) serves as cofactor.

Its subcellular location is the cytoplasm. The enzyme catalyses 2 D-alanine + ATP = D-alanyl-D-alanine + ADP + phosphate + H(+). It functions in the pathway cell wall biogenesis; peptidoglycan biosynthesis. Functionally, cell wall formation. This chain is D-alanine--D-alanine ligase, found in Pseudothermotoga lettingae (strain ATCC BAA-301 / DSM 14385 / NBRC 107922 / TMO) (Thermotoga lettingae).